Reading from the N-terminus, the 331-residue chain is MQNSTLIDSFGRQVTYVRLSVTDRCDFRCIYCMAEDMTFLPRKDVLSLEEFALLGRAFAELGVTKIRVSGGEPLIRKDVIQLFESLGAINSINDLCLTSNGSKLTELAKPLVDAGVHRINVSLDTLNEQRFKELTRFGDLNTVLKGIDAALNAGFKKIKLNSVVMKNYNLQEAADLATYALERGMDISFIEEMPLGEIHSHSRDVEFISSDELRNQLSNSFELTATNEHTGGPSRYWKARDYNAKIGFISPHSHNFCDTCNRVRVTASGRLLLCLGNEHSVDLRAILRAHPGEIEPIKEALINAMAIKPEKHEFNLEEEPQILRFMNMTGG.

Residues 9–233 (SFGRQVTYVR…TATNEHTGGP (225 aa)) enclose the Radical SAM core domain. Arg18 serves as a coordination point for GTP. The [4Fe-4S] cluster site is built by Cys25 and Cys29. Tyr31 is an S-adenosyl-L-methionine binding site. Residue Cys32 coordinates [4Fe-4S] cluster. GTP is bound at residue Arg67. Gly71 contacts S-adenosyl-L-methionine. Thr98 serves as a coordination point for GTP. Ser122 provides a ligand contact to S-adenosyl-L-methionine. Lys159 contributes to the GTP binding site. Met193 is a binding site for S-adenosyl-L-methionine. 2 residues coordinate [4Fe-4S] cluster: Cys257 and Cys260. 262–264 (RVR) lines the GTP pocket. Cys274 serves as a coordination point for [4Fe-4S] cluster.

Belongs to the radical SAM superfamily. MoaA family. In terms of assembly, monomer and homodimer. [4Fe-4S] cluster is required as a cofactor.

It catalyses the reaction GTP + AH2 + S-adenosyl-L-methionine = (8S)-3',8-cyclo-7,8-dihydroguanosine 5'-triphosphate + 5'-deoxyadenosine + L-methionine + A + H(+). Its pathway is cofactor biosynthesis; molybdopterin biosynthesis. Catalyzes the cyclization of GTP to (8S)-3',8-cyclo-7,8-dihydroguanosine 5'-triphosphate. The chain is GTP 3',8-cyclase from Saccharophagus degradans (strain 2-40 / ATCC 43961 / DSM 17024).